The sequence spans 352 residues: Ion-translocating oxidoreductase complex subunit D (352 aa).

Helical transmembrane passes span 20–40 (IMLLVLLAAVPGIAAQLWFFG), 42–62 (GTLVQILLASVSALLAEALVL), 78–109 (ALLTGLLLAVSIPPLAPWWMVVLGTVFAVIIA), 123–143 (PAMIGYVVLLISFPVQMTSWL), and 148–168 (IAVNIPGFIDAIQVIFSGHTA). FMN phosphoryl threonine is present on T187. 5 helical membrane passes run 214-234 (ILAGVGWQWVNLAWLAGGVWL), 242-262 (WHIPLSFLVTLALCATLGWLF), 267-287 (LAAPQIHLLSGATMLGAFFIL), 301-321 (LIFGALAGLLVWMIRSFGGYP), and 322-342 (DGVAFAVLLANITVPLIDYYT).

The protein belongs to the NqrB/RnfD family. As to quaternary structure, the complex is composed of six subunits: RsxA, RsxB, RsxC, RsxD, RsxE and RsxG. It depends on FMN as a cofactor.

It localises to the cell inner membrane. Its function is as follows. Part of a membrane-bound complex that couples electron transfer with translocation of ions across the membrane. Required to maintain the reduced state of SoxR. In Escherichia coli O6:H1 (strain CFT073 / ATCC 700928 / UPEC), this protein is Ion-translocating oxidoreductase complex subunit D.